A 164-amino-acid polypeptide reads, in one-letter code: Nitric oxide synthase, inducible (164 aa).

Phe-3 contacts (6R)-L-erythro-5,6,7,8-tetrahydrobiopterin. Tyr-18 contacts heme b. The tract at residues 42–62 (FKGLIRAVLFSQTLIKSALAK) is calmodulin-binding. One can recognise a Flavodoxin-like domain in the interval 66–164 (CTVLYATETG…SRMYPHFCAF (99 aa)). Thr-72, Glu-73, Thr-74, Lys-76, Ser-77, Ser-118, Thr-119, Ser-155, and Cys-162 together coordinate FMN.

The protein belongs to the NOS family. As to quaternary structure, homodimer. It depends on heme b as a cofactor. Requires FAD as cofactor. FMN serves as cofactor. The cofactor is (6R)-L-erythro-5,6,7,8-tetrahydrobiopterin.

It localises to the cytoplasm. The protein resides in the cytosol. It carries out the reaction 2 L-arginine + 3 NADPH + 4 O2 + H(+) = 2 L-citrulline + 2 nitric oxide + 3 NADP(+) + 4 H2O. Its activity is regulated as follows. Not stimulated by calcium/calmodulin. In terms of biological role, produces nitric oxide (NO) which is a messenger molecule with diverse functions throughout the body. In macrophages, NO mediates tumoricidal and bactericidal actions. Also has nitrosylase activity and mediates cysteine S-nitrosylation of cytoplasmic target proteins such COX2. This Carassius auratus (Goldfish) protein is Nitric oxide synthase, inducible (nos2).